The primary structure comprises 86 residues: MKTLILVVIALMVIEVKSDGYLMVRAGREKGCKIWCVINNEYCDKDCKLKGGNYGYCYFWKLACYCEGLPTSSPDIWTYEKNTCST.

An N-terminal signal peptide occupies residues 1 to 18; that stretch reads MKTLILVVIALMVIEVKS. Residues 19–85 enclose the LCN-type CS-alpha/beta domain; it reads DGYLMVRAGR…IWTYEKNTCS (67 aa). 4 disulfides stabilise this stretch: cysteine 32-cysteine 84, cysteine 36-cysteine 57, cysteine 43-cysteine 64, and cysteine 47-cysteine 66.

The protein belongs to the long (4 C-C) scorpion toxin superfamily. Sodium channel inhibitor family. Beta subfamily. In terms of tissue distribution, expressed by the venom gland.

The protein resides in the secreted. In terms of biological role, binds voltage-independently at site-4 of sodium channels (Nav) and shift the voltage of activation toward more negative potentials thereby affecting sodium channel activation and promoting spontaneous and repetitive firing. The sequence is that of Neurotoxin LmNaTx34.2 from Lychas mucronatus (Chinese swimming scorpion).